Reading from the N-terminus, the 233-residue chain is Leucyl/phenylalanyl-tRNA--protein transferase (233 aa).

The protein belongs to the L/F-transferase family.

It is found in the cytoplasm. It catalyses the reaction N-terminal L-lysyl-[protein] + L-leucyl-tRNA(Leu) = N-terminal L-leucyl-L-lysyl-[protein] + tRNA(Leu) + H(+). It carries out the reaction N-terminal L-arginyl-[protein] + L-leucyl-tRNA(Leu) = N-terminal L-leucyl-L-arginyl-[protein] + tRNA(Leu) + H(+). The enzyme catalyses L-phenylalanyl-tRNA(Phe) + an N-terminal L-alpha-aminoacyl-[protein] = an N-terminal L-phenylalanyl-L-alpha-aminoacyl-[protein] + tRNA(Phe). In terms of biological role, functions in the N-end rule pathway of protein degradation where it conjugates Leu, Phe and, less efficiently, Met from aminoacyl-tRNAs to the N-termini of proteins containing an N-terminal arginine or lysine. This chain is Leucyl/phenylalanyl-tRNA--protein transferase, found in Anaeromyxobacter dehalogenans (strain 2CP-C).